The primary structure comprises 200 residues: Dephospho-CoA kinase (200 aa).

Residues Ala6–Lys200 form the DPCK domain. Ala14–Thr19 provides a ligand contact to ATP.

It belongs to the CoaE family.

It localises to the cytoplasm. The catalysed reaction is 3'-dephospho-CoA + ATP = ADP + CoA + H(+). The protein operates within cofactor biosynthesis; coenzyme A biosynthesis; CoA from (R)-pantothenate: step 5/5. Catalyzes the phosphorylation of the 3'-hydroxyl group of dephosphocoenzyme A to form coenzyme A. The chain is Dephospho-CoA kinase from Sulfurimonas denitrificans (strain ATCC 33889 / DSM 1251) (Thiomicrospira denitrificans (strain ATCC 33889 / DSM 1251)).